The primary structure comprises 795 residues: Phenylalanine--tRNA ligase beta subunit (795 aa).

A tRNA-binding domain is found at 39 to 148 (AGQFHGVVVG…IDAPLGVDLR (110 aa)). A B5 domain is found at 401-476 (PQSATITLRR…RIYGYNNIPD (76 aa)). D454, D460, E463, and E464 together coordinate Mg(2+). In terms of domain architecture, FDX-ACB spans 701 to 794 (SRFPSNRRDI…LKQRFQASLR (94 aa)).

The protein belongs to the phenylalanyl-tRNA synthetase beta subunit family. Type 1 subfamily. In terms of assembly, tetramer of two alpha and two beta subunits. Requires Mg(2+) as cofactor.

The protein localises to the cytoplasm. It catalyses the reaction tRNA(Phe) + L-phenylalanine + ATP = L-phenylalanyl-tRNA(Phe) + AMP + diphosphate + H(+). The sequence is that of Phenylalanine--tRNA ligase beta subunit from Photorhabdus laumondii subsp. laumondii (strain DSM 15139 / CIP 105565 / TT01) (Photorhabdus luminescens subsp. laumondii).